The primary structure comprises 271 residues: ATP synthase subunit a (271 aa).

The next 5 helical transmembrane spans lie at 40–60 (TINI…LVLF), 100–120 (LIAP…LMDL), 146–166 (DVNV…FYNI), 220–240 (LIFI…LNVP), and 242–262 (AIFH…LTIV).

This sequence belongs to the ATPase A chain family. F-type ATPases have 2 components, CF(1) - the catalytic core - and CF(0) - the membrane proton channel. CF(1) has five subunits: alpha(3), beta(3), gamma(1), delta(1), epsilon(1). CF(0) has three main subunits: a(1), b(2) and c(9-12). The alpha and beta chains form an alternating ring which encloses part of the gamma chain. CF(1) is attached to CF(0) by a central stalk formed by the gamma and epsilon chains, while a peripheral stalk is formed by the delta and b chains.

Its subcellular location is the cell inner membrane. Key component of the proton channel; it plays a direct role in the translocation of protons across the membrane. The sequence is that of ATP synthase subunit a from Shigella flexneri.